A 243-amino-acid chain; its full sequence is UPF0246 protein MGAS10750_Spy1880 (243 aa).

This sequence belongs to the UPF0246 family.

The polypeptide is UPF0246 protein MGAS10750_Spy1880 (Streptococcus pyogenes serotype M4 (strain MGAS10750)).